Reading from the N-terminus, the 233-residue chain is 3,4-dihydroxy-2-butanone 4-phosphate synthase (233 aa).

Glutamate 37 is a binding site for Mg(2+). Glutamate 37 is a binding site for Mn(2+). Aspartate 41 contacts D-ribulose 5-phosphate. Residue cysteine 66 is modified to S-glutathionyl cysteine. D-ribulose 5-phosphate is bound by residues threonine 92 and 150 to 154; that span reads RRGHT. Histidine 153 is a binding site for Mg(2+). Histidine 153 contacts Mn(2+).

In terms of assembly, homodimer. The cofactor is Mg(2+). It depends on Mn(2+) as a cofactor. Post-translationally, S-glutathionylation is reversible and dependent on a glutaredoxin.

It catalyses the reaction D-ribulose 5-phosphate = (2S)-2-hydroxy-3-oxobutyl phosphate + formate + H(+). The protein operates within cofactor biosynthesis; riboflavin biosynthesis; 2-hydroxy-3-oxobutyl phosphate from D-ribulose 5-phosphate: step 1/1. Catalyzes the conversion of D-ribulose 5-phosphate to formate and 3,4-dihydroxy-2-butanone 4-phosphate. The sequence is that of 3,4-dihydroxy-2-butanone 4-phosphate synthase (RIB3) from Pyricularia oryzae (strain 70-15 / ATCC MYA-4617 / FGSC 8958) (Rice blast fungus).